Here is a 102-residue protein sequence, read N- to C-terminus: Small ribosomal subunit protein uS10 (102 aa).

It belongs to the universal ribosomal protein uS10 family. In terms of assembly, part of the 30S ribosomal subunit.

Functionally, involved in the binding of tRNA to the ribosomes. The sequence is that of Small ribosomal subunit protein uS10 from Roseiflexus sp. (strain RS-1).